A 353-amino-acid polypeptide reads, in one-letter code: MEGIRIFTSDNYTEDDLGSGDYDSMKEPCFREENAHFNRIFLPTVYSIIFLTGIVGNGLVILVMGYQKKLRSMTDKYRLHLSVADLLFVLTLPFWAVDAVANWYFGKFLCKAVHVIYTVNLYSSVLILAFISLDRYLAIVHATNSQKPRKLLAEKVVYVGVWLPAVLLTIPDLIFADIKEVDERYICDRFYPSDLWLVVFQFQHIVVGLLLPGIVILSCYCIIISKLSHSKGYQKRKALKTTVILILTFFACWLPYYIGISIDSFILLEIIQQGCEFESTVHKWISITEALAFFHCCLNPILYAFLGAKFKTSAQHALTSVSRGSSLKILSKGKRGGHSSVSTESESSSFHSS.

Positions Met1–Tyr22 are important for chemokine binding and signaling. Residues Met1–Arg39 lie on the Extracellular side of the membrane. The N-linked (GlcNAc...) asparagine glycan is linked to Asn11. Residue Tyr12 is modified to Sulfotyrosine. A glycan (O-linked (Xyl...) (chondroitin sulfate) serine) is linked at Ser19. Residue Tyr22 is modified to Sulfotyrosine. 2 cysteine pairs are disulfide-bonded: Cys29–Cys275 and Cys110–Cys187. Residues Ile40–Met64 traverse the membrane as a helical segment. The Cytoplasmic portion of the chain corresponds to Gly65–Arg78. A helical transmembrane segment spans residues Leu79–Val100. The interval Trp95–Asp98 is chemokine binding. The Extracellular portion of the chain corresponds to Ala101 to Lys111. Residues Ala112–Ile131 traverse the membrane as a helical segment. Residues His114 to Thr118 are chemokine binding. Over Ser132–Lys155 the chain is Cytoplasmic. The short motif at Asp134 to Tyr136 is the Important for signaling element. The interval Tyr136–Pro148 is involved in dimerization; when bound to chemokine. The helical transmembrane segment at Val156–Phe175 threads the bilayer. The Extracellular portion of the chain corresponds to Ala176 to Trp196. The chemokine binding, important for signaling stretch occupies residues Cys187 to Tyr191. An involved in dimerization region spans residues Pro192 to Leu211. Residues Leu197–Leu217 traverse the membrane as a helical segment. Topologically, residues Ser218–Thr242 are cytoplasmic. Residues Val243–Ile262 traverse the membrane as a helical segment. Residues Asp263–Lys283 are Extracellular-facing. The interval Leu267–Glu269 is involved in dimerization. Residues Trp284–Tyr303 form a helical membrane-spanning segment. At Ala304–Ser353 the chain is on the cytoplasmic side. Residues Ser320 and Ser322 each carry the phosphoserine modification. 2 positions are modified to phosphoserine; by PKC and GRK6: Ser325 and Ser326. A disordered region spans residues Leu330–Ser353. Ser331 carries the post-translational modification Phosphoserine; by GRK6. Lys332 is covalently cross-linked (Glycyl lysine isopeptide (Lys-Gly) (interchain with G-Cter in ubiquitin)). The segment covering His338–Ser353 has biased composition (low complexity). The residue at position 340 (Ser340) is a Phosphoserine; by GRK6. Phosphoserine occurs at positions 349 and 352.

Belongs to the G-protein coupled receptor 1 family. Monomer. Can form homodimers. Interacts with CD164. Interacts with ARRB2; the interaction is dependent on the C-terminal phosphorylation of CXCR4 and allows activation of MAPK1 and MAPK3. Interacts with ARR3; the interaction is dependent on the C-terminal phosphorylation of CXCR4 and modulates calcium mobilization. Interacts with RNF113A; the interaction, enhanced by CXCL12, promotes CXCR4 ubiquitination and subsequent degradation. Interacts (via the cytoplasmic C-terminal) with ITCH (via the WW domains I and II); the interaction, enhanced by CXCL12, promotes CXCR4 ubiquitination and leads to its degradation. Interacts with extracellular ubiquitin. Interacts with DBN1; this interaction is enhanced by antigenic stimulation. Following LPS binding, may form a complex with GDF5, HSP90AA1 and HSPA8. Post-translationally, phosphorylated on agonist stimulation. Rapidly phosphorylated on serine and threonine residues in the C-terminal. Phosphorylation at Ser-325 and Ser-326 leads to recruitment of ITCH, ubiquitination and protein degradation. In terms of processing, ubiquitinated after ligand binding, leading to its degradation. Ubiquitinated by ITCH at the cell membrane on agonist stimulation. The ubiquitin-dependent mechanism, endosomal sorting complex required for transport (ESCRT), then targets CXCR4 for lysosomal degradation. This process is dependent also on prior Ser-/Thr-phosphorylation in the C-terminal of CXCR4. Also binding of ARRB1 to STAM negatively regulates CXCR4 sorting to lysosomes though modulating ubiquitination of SFR5S. Sulfation is required for efficient binding of CXCL12/SDF-1alpha and promotes its dimerization. Post-translationally, O- and N-glycosylated. N-glycosylation can mask coreceptor function. The O-glycosylation chondroitin sulfate attachment does not affect interaction with CXCL12/SDF-1alpha nor its coreceptor activity. Brain, heart, kidney, lung and liver.

The protein resides in the cell membrane. It localises to the cell junction. Its subcellular location is the early endosome. The protein localises to the late endosome. It is found in the lysosome. In terms of biological role, receptor for the C-X-C chemokine CXCL12/SDF-1 that transduces a signal by increasing intracellular calcium ion levels and enhancing MAPK1/MAPK3 activation. Involved in the AKT signaling cascade. Plays a role in regulation of cell migration, e.g. during wound healing. Acts as a receptor for extracellular ubiquitin; leading to enhanced intracellular calcium ions and reduced cellular cAMP levels. Binds bacterial lipopolysaccharide (LPS) et mediates LPS-induced inflammatory response, including TNF secretion by monocytes. Involved in hematopoiesis and in cardiac ventricular septum formation. Also plays an essential role in vascularization of the gastrointestinal tract, probably by regulating vascular branching and/or remodeling processes in endothelial cells. Involved in cerebellar development. In the CNS, could mediate hippocampal-neuron survival. The protein is C-X-C chemokine receptor type 4 (CXCR4) of Bos taurus (Bovine).